A 483-amino-acid polypeptide reads, in one-letter code: MIKLEQVVEILKKDNNFREISSAGEYYFNWPKEVNFDQLSYDSRKSTKDTLFFAKGLNFKKEYLTDLEAAFYVSEFDYEVALPAIIVTDVKRAMALIAANFYEFPQNKLKTLALTGTKGKTTSAYFAKAILDKMNGGKTALLSTAQTTLDGQNYFKSELTTPESLDLLEMMAKALENGMTHLVMEVSSQAYKTERVYGLTFDVGVFLNISPDHIGPVEHPTLEDYFYCKRQLLKNSRYFVANAEMNHFAIIKEELNERKIPHAFYGADSENKIIESKGLHFVTDGSVSGEFDIRLLGRFNQENALATALATKALGASFENIRQGLASAIVPGRMELLTAKNGAHIYIDYAHNGLSLENLVEVVEDHHAGQLFLVLGSTGNKGESRRKDFGQVIENHPRLNVILTTDDSNRENPKTIADEIASFVSRELDFELDREFAIKKAISKTQNSDDAVIIAGKGADMFQLKDGKREPYIGDSPAAQKYL.

Position 43 (Ser43) interacts with UDP-N-acetyl-alpha-D-muramoyl-L-alanyl-D-glutamate. 116 to 122 (GTKGKTT) lines the ATP pocket. UDP-N-acetyl-alpha-D-muramoyl-L-alanyl-D-glutamate is bound by residues 160-161 (TT), Ser187, and Arg195. Lys229 bears the N6-carboxylysine mark.

It belongs to the MurCDEF family. MurE subfamily. In terms of processing, carboxylation is probably crucial for Mg(2+) binding and, consequently, for the gamma-phosphate positioning of ATP.

It localises to the cytoplasm. Its pathway is cell wall biogenesis; peptidoglycan biosynthesis. Catalyzes the addition of an amino acid to the nucleotide precursor UDP-N-acetylmuramoyl-L-alanyl-D-glutamate (UMAG) in the biosynthesis of bacterial cell-wall peptidoglycan. The chain is UDP-N-acetylmuramyl-tripeptide synthetase from Lactococcus lactis subsp. cremoris (strain MG1363).